The following is a 38-amino-acid chain: Large ribosomal subunit protein bL36A (38 aa).

This sequence belongs to the bacterial ribosomal protein bL36 family.

In Enterobacter sp. (strain 638), this protein is Large ribosomal subunit protein bL36A.